A 240-amino-acid polypeptide reads, in one-letter code: Ubiquinone biosynthesis O-methyltransferase (240 aa).

S-adenosyl-L-methionine contacts are provided by R44, G64, D85, and M129.

The protein belongs to the methyltransferase superfamily. UbiG/COQ3 family.

It carries out the reaction a 3-demethylubiquinol + S-adenosyl-L-methionine = a ubiquinol + S-adenosyl-L-homocysteine + H(+). It catalyses the reaction a 3-(all-trans-polyprenyl)benzene-1,2-diol + S-adenosyl-L-methionine = a 2-methoxy-6-(all-trans-polyprenyl)phenol + S-adenosyl-L-homocysteine + H(+). It functions in the pathway cofactor biosynthesis; ubiquinone biosynthesis. In terms of biological role, O-methyltransferase that catalyzes the 2 O-methylation steps in the ubiquinone biosynthetic pathway. In Photorhabdus laumondii subsp. laumondii (strain DSM 15139 / CIP 105565 / TT01) (Photorhabdus luminescens subsp. laumondii), this protein is Ubiquinone biosynthesis O-methyltransferase.